We begin with the raw amino-acid sequence, 447 residues long: Tubulin beta-2 chain (447 aa).

Residues Q11, E69, S138, G142, T143, G144, N204, and N226 each coordinate GTP. E69 contributes to the Mg(2+) binding site. Residues 426–447 (QDAGVDEEEEEYEEEAPLEEEV) are disordered. Positions 429–447 (GVDEEEEEYEEEAPLEEEV) are enriched in acidic residues.

The protein belongs to the tubulin family. In terms of assembly, dimer of alpha and beta chains. A typical microtubule is a hollow water-filled tube with an outer diameter of 25 nm and an inner diameter of 15 nM. Alpha-beta heterodimers associate head-to-tail to form protofilaments running lengthwise along the microtubule wall with the beta-tubulin subunit facing the microtubule plus end conferring a structural polarity. Microtubules usually have 13 protofilaments but different protofilament numbers can be found in some organisms and specialized cells. Mg(2+) serves as cofactor.

The protein resides in the cytoplasm. It localises to the cytoskeleton. Functionally, tubulin is the major constituent of microtubules, a cylinder consisting of laterally associated linear protofilaments composed of alpha- and beta-tubulin heterodimers. Microtubules grow by the addition of GTP-tubulin dimers to the microtubule end, where a stabilizing cap forms. Below the cap, tubulin dimers are in GDP-bound state, owing to GTPase activity of alpha-tubulin. The chain is Tubulin beta-2 chain (TUB2) from Colletotrichum gloeosporioides (Anthracnose fungus).